A 446-amino-acid polypeptide reads, in one-letter code: UDP-N-acetylmuramoylalanine--D-glutamate ligase (446 aa).

Residue 115–121 (GTNGKTT) participates in ATP binding.

It belongs to the MurCDEF family.

The protein resides in the cytoplasm. The enzyme catalyses UDP-N-acetyl-alpha-D-muramoyl-L-alanine + D-glutamate + ATP = UDP-N-acetyl-alpha-D-muramoyl-L-alanyl-D-glutamate + ADP + phosphate + H(+). It participates in cell wall biogenesis; peptidoglycan biosynthesis. Functionally, cell wall formation. Catalyzes the addition of glutamate to the nucleotide precursor UDP-N-acetylmuramoyl-L-alanine (UMA). The sequence is that of UDP-N-acetylmuramoylalanine--D-glutamate ligase from Trichlorobacter lovleyi (strain ATCC BAA-1151 / DSM 17278 / SZ) (Geobacter lovleyi).